A 261-amino-acid polypeptide reads, in one-letter code: MASSKLLSLALFLVLLTHANSATETSFNFPNFHTDDKLILQGNATISSKGQLQLTGVGSNELPRVDSLGRAFYSDPIQIKDSNNVASFNTNFTFIIRAKNQSISAYGLAFALVPVNSPPQKKQEFLGIFNTNNPEPNARTVAVVFNTFKNRIDFDKNFIKPYVNENCDFHKYNGEKTDVQITYDSSNNDLRVFLHFTVSQVKCSVSATVHLEKEVDEWVSVGFSATSGLTEDTTETHDVLSWSFSSKFRNKLSNILLNNIL.

The first 21 residues, Met-1 to Ser-21, serve as a signal peptide directing secretion. N-linked (GlcNAc...) asparagine glycosylation is found at Asn-43, Asn-91, and Asn-100. A disulfide bridge links Cys-167 with Cys-203. The propeptide occupies Ile-255 to Leu-261.

This sequence belongs to the leguminous lectin family. In terms of assembly, monomer. Post-translationally, the C-terminal segment appears to be highly susceptible to proteolysis.

Seed storage. This carbohydrate-binding lectin has toxic effects on bean bruchid pests. The polypeptide is Arcelin-5A (ARC5A) (Phaseolus vulgaris (Kidney bean)).